The sequence spans 166 residues: Holin-like protein TcdE (166 aa).

4 helical membrane passes run 15–35, 36–56, 77–97, and 111–131; these read IFFY…LSEH, IFIK…CLSA, MIAC…NFLF, and HLGI…VSIL.

It belongs to the bacteriophage holin family. In terms of assembly, homomultimer.

It is found in the cell membrane. Its function is as follows. Holin-like protein required for secretion of toxins A and B (TcdA and TcdB). Facilitates the release of toxins to the extracellular environment without causing the bacterial cell lysis. Has weak activity, suggesting that it may act as a antiholin when multiple forms are produced. The polypeptide is Holin-like protein TcdE (Clostridioides difficile (Peptoclostridium difficile)).